We begin with the raw amino-acid sequence, 372 residues long: Protein RecA (372 aa).

66–73 (GPESSGKT) provides a ligand contact to ATP. Residues 328-359 (GVGVRPEEPTATESGPDAATAESAPAVPAPAT) form a disordered region. Residues 345-359 (AATAESAPAVPAPAT) are compositionally biased toward low complexity.

It belongs to the RecA family.

The protein resides in the cytoplasm. Functionally, can catalyze the hydrolysis of ATP in the presence of single-stranded DNA, the ATP-dependent uptake of single-stranded DNA by duplex DNA, and the ATP-dependent hybridization of homologous single-stranded DNAs. It interacts with LexA causing its activation and leading to its autocatalytic cleavage. The polypeptide is Protein RecA (Streptomyces ambofaciens).